The sequence spans 291 residues: Homeobox protein knotted-1-like 7 (291 aa).

One can recognise an ELK domain in the interval 194 to 214 (ELKLELKQGFKSRIEDVREEI). The homeobox; TALE-type DNA-binding region spans 215–278 (MRKRRAGKLP…NQRKRNWHNN (64 aa)).

It belongs to the TALE/KNOX homeobox family. In terms of assembly, may form heterodimeric complex with the TALE/BELL proteins. Interacts with OFP1, OFP2, OFP3, OFP4 and OFP6.

Its subcellular location is the nucleus. Functionally, may be involved in secondary cell wall biosynthesis. The chain is Homeobox protein knotted-1-like 7 (KNAT7) from Arabidopsis thaliana (Mouse-ear cress).